Reading from the N-terminus, the 101-residue chain is MGTRYFLVGFLILLVLGFEVQGAHVPQQDEASSPALLTQVQESLLGYWDTAKAAAQKLYKKTYLPAVDEKIRDIYSKSTAAVTTYAGIITDQVFSVLSGKD.

Residues 1–22 (MGTRYFLVGFLILLVLGFEVQG) form the signal peptide. Residues 66–74 (AVDEKIRDI) form a lipid binding region. Residues 78–101 (STAAVTTYAGIITDQVFSVLSGKD) are lipoprotein lipase cofactor.

This sequence belongs to the apolipoprotein C2 family. In terms of processing, proapolipoprotein C-II is synthesized as a sialic acid containing glycoprotein which is subsequently desialylated prior to its proteolytic processing. Proapolipoprotein C-II undergoes proteolytic cleavage of its N-terminal hexapeptide to generate apolipoprotein C-II. In bovine, proapolipoprotein C-II was found to be the minor form whereas apolipoprotein C-II was found to be the major form in plasma.

Its subcellular location is the secreted. Functionally, component of chylomicrons, very low-density lipoproteins (VLDL), low-density lipoproteins (LDL), and high-density lipoproteins (HDL) in plasma. Plays an important role in lipoprotein metabolism as an activator of lipoprotein lipase. Both proapolipoprotein C-II and apolipoprotein C-II can activate lipoprotein lipase. The chain is Apolipoprotein C-II (APOC2) from Bos taurus (Bovine).